The primary structure comprises 356 residues: 3-dehydroquinate synthase (356 aa).

Residues 101–105 (GVIGD), 125–126 (TT), Lys138, and Lys147 each bind NAD(+). Zn(2+) contacts are provided by Glu180, His243, and His260.

The protein belongs to the sugar phosphate cyclases superfamily. Dehydroquinate synthase family. It depends on Co(2+) as a cofactor. The cofactor is Zn(2+). NAD(+) serves as cofactor.

It is found in the cytoplasm. The catalysed reaction is 7-phospho-2-dehydro-3-deoxy-D-arabino-heptonate = 3-dehydroquinate + phosphate. Its pathway is metabolic intermediate biosynthesis; chorismate biosynthesis; chorismate from D-erythrose 4-phosphate and phosphoenolpyruvate: step 2/7. In terms of biological role, catalyzes the conversion of 3-deoxy-D-arabino-heptulosonate 7-phosphate (DAHP) to dehydroquinate (DHQ). In Alkaliphilus metalliredigens (strain QYMF), this protein is 3-dehydroquinate synthase.